Consider the following 204-residue polypeptide: Ribosome maturation factor RimP (204 aa).

Positions Asn177–His204 are disordered. Over residues Ser181–Glu198 the composition is skewed to acidic residues.

It belongs to the RimP family.

The protein resides in the cytoplasm. Functionally, required for maturation of 30S ribosomal subunits. This Cereibacter sphaeroides (strain ATCC 17025 / ATH 2.4.3) (Rhodobacter sphaeroides) protein is Ribosome maturation factor RimP.